The chain runs to 353 residues: MTIALGKFTKDENDLFDIMDDWLRRDRFVFVGWSGLLLFPCAYFAIGGWFTGTTFVTSWYTHGLASSYLEGCNFLTAAVSTPANSLAHSLLLLWGPEAQGDFTRWCQLGGLWTFVALHGAFGLIGFMLRQFELARSVQLRPYNAIAFSGPIAVFVSVFLIYPLGQSGWFFAPSFGVAAIFRFILFFQGFHNWTLNPFHMMGVAGVLGAALLCAIHGATVENTLFEDGDGANTFRAFNPTQAEETYSMVTANRFWSQIFGVAFSNKRWLHFFMLFVPVTGLWMSALGVVGLALNLRAYDFVSQEIRAAEDPEFETFYTKNILLNEGIRAWMAAQDQPHENLIFPEEVLPRGNAL.

Thr2 carries the post-translational modification N-acetylthreonine. Thr2 carries the phosphothreonine modification. A helical membrane pass occupies residues 41–61 (CAYFAIGGWFTGTTFVTSWYT). His118 contacts chlorophyll a. The helical transmembrane segment at 125–141 (GFMLRQFELARSVQLRP) threads the bilayer. The pheophytin a site is built by Gln130 and Asn143. The helical transmembrane segment at 153–166 (VFVSVFLIYPLGQS) threads the bilayer. His198 contacts chlorophyll a. A helical membrane pass occupies residues 208-228 (AALLCAIHGATVENTLFEDGD). Residues His215 and Phe262 each contribute to the a plastoquinone site. Residue His215 coordinates Fe cation. His269 contacts Fe cation. Residues 279–295 (GLWMSALGVVGLALNLR) traverse the membrane as a helical segment.

The protein belongs to the reaction center PufL/M/PsbA/D family. As to quaternary structure, PSII is composed of 1 copy each of membrane proteins PsbA, PsbB, PsbC, PsbD, PsbE, PsbF, PsbH, PsbI, PsbJ, PsbK, PsbL, PsbM, PsbT, PsbX, PsbY, PsbZ, Psb30/Ycf12, at least 3 peripheral proteins of the oxygen-evolving complex and a large number of cofactors. It forms dimeric complexes. Requires The D1/D2 heterodimer binds P680, chlorophylls that are the primary electron donor of PSII, and subsequent electron acceptors. It shares a non-heme iron and each subunit binds pheophytin, quinone, additional chlorophylls, carotenoids and lipids. There is also a Cl(-1) ion associated with D1 and D2, which is required for oxygen evolution. The PSII complex binds additional chlorophylls, carotenoids and specific lipids. as cofactor.

It is found in the plastid. Its subcellular location is the chloroplast thylakoid membrane. It carries out the reaction 2 a plastoquinone + 4 hnu + 2 H2O = 2 a plastoquinol + O2. Photosystem II (PSII) is a light-driven water:plastoquinone oxidoreductase that uses light energy to abstract electrons from H(2)O, generating O(2) and a proton gradient subsequently used for ATP formation. It consists of a core antenna complex that captures photons, and an electron transfer chain that converts photonic excitation into a charge separation. The D1/D2 (PsbA/PsbD) reaction center heterodimer binds P680, the primary electron donor of PSII as well as several subsequent electron acceptors. D2 is needed for assembly of a stable PSII complex. The polypeptide is Photosystem II D2 protein (Carica papaya (Papaya)).